A 330-amino-acid chain; its full sequence is tRNA U34 carboxymethyltransferase (330 aa).

Carboxy-S-adenosyl-L-methionine is bound by residues K91, W105, K110, G130, 152–154, 181–182, M196, Y200, and R315; these read DPS and IE.

Belongs to the class I-like SAM-binding methyltransferase superfamily. CmoB family. Homotetramer.

The enzyme catalyses carboxy-S-adenosyl-L-methionine + 5-hydroxyuridine(34) in tRNA = 5-carboxymethoxyuridine(34) in tRNA + S-adenosyl-L-homocysteine + H(+). Catalyzes carboxymethyl transfer from carboxy-S-adenosyl-L-methionine (Cx-SAM) to 5-hydroxyuridine (ho5U) to form 5-carboxymethoxyuridine (cmo5U) at position 34 in tRNAs. This chain is tRNA U34 carboxymethyltransferase, found in Shewanella piezotolerans (strain WP3 / JCM 13877).